The following is a 216-amino-acid chain: Guanylate kinase (216 aa).

In terms of domain architecture, Guanylate kinase-like spans 12–191; that stretch reads GLLFVISSPS…CVKQVKNILT (180 aa). 19–26 provides a ligand contact to ATP; that stretch reads SPSGAGKS.

It belongs to the guanylate kinase family.

The protein localises to the cytoplasm. The enzyme catalyses GMP + ATP = GDP + ADP. Its function is as follows. Essential for recycling GMP and indirectly, cGMP. In Zymomonas mobilis subsp. mobilis (strain ATCC 31821 / ZM4 / CP4), this protein is Guanylate kinase.